A 424-amino-acid polypeptide reads, in one-letter code: 3-isopropylmalate dehydratase large subunit 2 (424 aa).

Residues C299, C359, and C362 each contribute to the [4Fe-4S] cluster site.

It belongs to the aconitase/IPM isomerase family. LeuC type 2 subfamily. Heterodimer of LeuC and LeuD. It depends on [4Fe-4S] cluster as a cofactor.

The catalysed reaction is (2R,3S)-3-isopropylmalate = (2S)-2-isopropylmalate. Its pathway is amino-acid biosynthesis; L-leucine biosynthesis; L-leucine from 3-methyl-2-oxobutanoate: step 2/4. Functionally, catalyzes the isomerization between 2-isopropylmalate and 3-isopropylmalate, via the formation of 2-isopropylmaleate. This is 3-isopropylmalate dehydratase large subunit 2 from Rubrobacter xylanophilus (strain DSM 9941 / JCM 11954 / NBRC 16129 / PRD-1).